Here is a 147-residue protein sequence, read N- to C-terminus: D-aminoacyl-tRNA deacylase (147 aa).

A Gly-cisPro motif, important for rejection of L-amino acids motif is present at residues 137–138; the sequence is GP.

Belongs to the DTD family. In terms of assembly, homodimer.

Its subcellular location is the cytoplasm. The enzyme catalyses glycyl-tRNA(Ala) + H2O = tRNA(Ala) + glycine + H(+). The catalysed reaction is a D-aminoacyl-tRNA + H2O = a tRNA + a D-alpha-amino acid + H(+). Its function is as follows. An aminoacyl-tRNA editing enzyme that deacylates mischarged D-aminoacyl-tRNAs. Also deacylates mischarged glycyl-tRNA(Ala), protecting cells against glycine mischarging by AlaRS. Acts via tRNA-based rather than protein-based catalysis; rejects L-amino acids rather than detecting D-amino acids in the active site. By recycling D-aminoacyl-tRNA to D-amino acids and free tRNA molecules, this enzyme counteracts the toxicity associated with the formation of D-aminoacyl-tRNA entities in vivo and helps enforce protein L-homochirality. In Acinetobacter baumannii (strain ACICU), this protein is D-aminoacyl-tRNA deacylase.